Consider the following 347-residue polypeptide: Heat-inducible transcription repressor HrcA (347 aa).

It belongs to the HrcA family.

Its function is as follows. Negative regulator of class I heat shock genes (grpE-dnaK-dnaJ and groELS operons). Prevents heat-shock induction of these operons. The protein is Heat-inducible transcription repressor HrcA of Lactococcus lactis subsp. cremoris (strain SK11).